The following is an 87-amino-acid chain: Antitoxin RelB1 (87 aa).

Functionally, antitoxin component of a type II toxin-antitoxin (TA) system. Neutralizes the effect of cognate toxin RelE1, but no other RelE or ParE toxin. The protein is Antitoxin RelB1 (relB1) of Caulobacter vibrioides (strain ATCC 19089 / CIP 103742 / CB 15) (Caulobacter crescentus).